Reading from the N-terminus, the 247-residue chain is Small ribosomal subunit protein uS2 (247 aa).

Belongs to the universal ribosomal protein uS2 family.

The chain is Small ribosomal subunit protein uS2 from Ralstonia nicotianae (strain ATCC BAA-1114 / GMI1000) (Ralstonia solanacearum).